A 236-amino-acid polypeptide reads, in one-letter code: uncharacterized protein (236 aa).

An N-terminal signal peptide occupies residues 1–24; the sequence is MRKKHFNMILKLALISSLLALAAS. 3 N-linked (GlcNAc...) asparagine glycosylation sites follow: Asn-59, Asn-171, and Asn-197.

The protein resides in the secreted. This is an uncharacterized protein from Caenorhabditis elegans.